Here is a 22-residue protein sequence, read N- to C-terminus: Chlorate reductase subunit gamma (22 aa).

Positions 1 to 22 (EXSEQNPNILEIKPGDTVKVXT) are disordered.

In terms of assembly, heterotrimer of alpha, beta and gamma subunits. Heme b is required as a cofactor.

It is found in the cytoplasm. Functionally, may transfer electrons to the iron-sulfur centers of the beta subunit of chlorate reductase. This is Chlorate reductase subunit gamma from Stutzerimonas chloritidismutans (Pseudomonas chloritidismutans).